The chain runs to 61 residues: Small ribosomal subunit protein uS14 (61 aa).

Zn(2+) contacts are provided by Cys-24, Cys-27, Cys-40, and Cys-43.

The protein belongs to the universal ribosomal protein uS14 family. Zinc-binding uS14 subfamily. As to quaternary structure, part of the 30S ribosomal subunit. Contacts proteins S3 and S10. Zn(2+) is required as a cofactor.

In terms of biological role, binds 16S rRNA, required for the assembly of 30S particles and may also be responsible for determining the conformation of the 16S rRNA at the A site. This Mycoplasma capricolum subsp. capricolum (strain California kid / ATCC 27343 / NCTC 10154) protein is Small ribosomal subunit protein uS14.